A 379-amino-acid chain; its full sequence is Chaperone protein DnaJ (379 aa).

Residues 7-72 (CYYETLEVDR…DKRAAYDRYG (66 aa)) form the J domain. Residues 135–213 (GKTAQIEIPV…CSGAGRIERE (79 aa)) form a CR-type zinc finger. Residues Cys148, Cys151, Cys165, Cys168, Cys187, Cys190, Cys201, and Cys204 each contribute to the Zn(2+) site. 4 CXXCXGXG motif repeats span residues 148-155 (CESCSGTG), 165-172 (CSMCGGAG), 187-194 (CPGCQGRG), and 201-208 (CPACSGAG).

Belongs to the DnaJ family. As to quaternary structure, homodimer. Zn(2+) is required as a cofactor.

The protein resides in the cytoplasm. Functionally, participates actively in the response to hyperosmotic and heat shock by preventing the aggregation of stress-denatured proteins and by disaggregating proteins, also in an autonomous, DnaK-independent fashion. Unfolded proteins bind initially to DnaJ; upon interaction with the DnaJ-bound protein, DnaK hydrolyzes its bound ATP, resulting in the formation of a stable complex. GrpE releases ADP from DnaK; ATP binding to DnaK triggers the release of the substrate protein, thus completing the reaction cycle. Several rounds of ATP-dependent interactions between DnaJ, DnaK and GrpE are required for fully efficient folding. Also involved, together with DnaK and GrpE, in the DNA replication of plasmids through activation of initiation proteins. The sequence is that of Chaperone protein DnaJ from Rhodopseudomonas palustris (strain BisB18).